Here is a 364-residue protein sequence, read N- to C-terminus: tRNA(Met) cytidine acetate ligase (364 aa).

ATP contacts are provided by residues 7–20 (IAEF…HKYL), Gly-96, Asn-152, and Arg-175.

The protein belongs to the TmcAL family.

It localises to the cytoplasm. The catalysed reaction is cytidine(34) in elongator tRNA(Met) + acetate + ATP = N(4)-acetylcytidine(34) in elongator tRNA(Met) + AMP + diphosphate. In terms of biological role, catalyzes the formation of N(4)-acetylcytidine (ac(4)C) at the wobble position of elongator tRNA(Met), using acetate and ATP as substrates. First activates an acetate ion to form acetyladenylate (Ac-AMP) and then transfers the acetyl group to tRNA to form ac(4)C34. The sequence is that of tRNA(Met) cytidine acetate ligase from Streptococcus sanguinis (strain SK36).